Here is a 766-residue protein sequence, read N- to C-terminus: Polyribonucleotide nucleotidyltransferase (766 aa).

Asp490 and Asp496 together coordinate Mg(2+). A KH domain is found at 557 to 616 (PKIDTITIPVDKIKVVIGKGGEQIDKIIAETGVKIDIDDEGLCSIFSSDQSAIDRAKEII). Residues 626-694 (GEVYEAKVVR…DKGRVDASMR (69 aa)) enclose the S1 motif domain. 2 stretches are compositionally biased toward basic and acidic residues: residues 700–734 (PEGYVEPERKPRERRDNKDRRNGNGFDRRNNDRNN) and 744–766 (FELRERKSHVDHEFPELSTKKPE). Residues 700–766 (PEGYVEPERK…FPELSTKKPE (67 aa)) are disordered.

This sequence belongs to the polyribonucleotide nucleotidyltransferase family. It depends on Mg(2+) as a cofactor.

It localises to the cytoplasm. It catalyses the reaction RNA(n+1) + phosphate = RNA(n) + a ribonucleoside 5'-diphosphate. In terms of biological role, involved in mRNA degradation. Catalyzes the phosphorolysis of single-stranded polyribonucleotides processively in the 3'- to 5'-direction. The chain is Polyribonucleotide nucleotidyltransferase from Lactococcus lactis subsp. cremoris (strain MG1363).